The primary structure comprises 841 residues: Protein translocase subunit SecA (841 aa).

ATP contacts are provided by residues glutamine 85, glycine 103–threonine 107, and aspartate 492. A disordered region spans residues isoleucine 790–arginine 814. Residues glutamine 798–glutamine 807 show a composition bias toward basic and acidic residues. Residues cysteine 825, cysteine 827, cysteine 836, and cysteine 837 each coordinate Zn(2+).

It belongs to the SecA family. Monomer and homodimer. Part of the essential Sec protein translocation apparatus which comprises SecA, SecYEG and auxiliary proteins SecDF. Other proteins may also be involved. The cofactor is Zn(2+).

The protein localises to the cell membrane. It localises to the cytoplasm. The catalysed reaction is ATP + H2O + cellular proteinSide 1 = ADP + phosphate + cellular proteinSide 2.. Its function is as follows. Part of the Sec protein translocase complex. Interacts with the SecYEG preprotein conducting channel. Has a central role in coupling the hydrolysis of ATP to the transfer of proteins into and across the cell membrane, serving as an ATP-driven molecular motor driving the stepwise translocation of polypeptide chains across the membrane. This Bacillus licheniformis (strain ATCC 14580 / DSM 13 / JCM 2505 / CCUG 7422 / NBRC 12200 / NCIMB 9375 / NCTC 10341 / NRRL NRS-1264 / Gibson 46) protein is Protein translocase subunit SecA.